The chain runs to 180 residues: NADH-quinone oxidoreductase subunit I (180 aa).

4Fe-4S ferredoxin-type domains lie at 50–80 and 90–119; these read LTRN…LQKS and KFFR…LMPD. [4Fe-4S] cluster is bound by residues C60, C63, C66, C70, C99, C102, C105, and C109.

It belongs to the complex I 23 kDa subunit family. NDH-1 is composed of 13 different subunits. Subunits NuoA, H, J, K, L, M, N constitute the membrane sector of the complex. It depends on [4Fe-4S] cluster as a cofactor.

Its subcellular location is the cell membrane. The catalysed reaction is a quinone + NADH + 5 H(+)(in) = a quinol + NAD(+) + 4 H(+)(out). NDH-1 shuttles electrons from NADH, via FMN and iron-sulfur (Fe-S) centers, to quinones in the respiratory chain. The immediate electron acceptor for the enzyme in this species is believed to be ubiquinone. Couples the redox reaction to proton translocation (for every two electrons transferred, four hydrogen ions are translocated across the cytoplasmic membrane), and thus conserves the redox energy in a proton gradient. This is NADH-quinone oxidoreductase subunit I from Buchnera aphidicola subsp. Schizaphis graminum (strain Sg).